The following is a 675-amino-acid chain: Methionine--tRNA ligase (675 aa).

A 'HIGH' region motif is present at residues 12 to 22 (PYANGPIHLGH). Positions 143, 146, 156, and 159 each coordinate Zn(2+). The 'KMSKS' region motif lies at 328–332 (KMSKS). Residue K331 participates in ATP binding. A tRNA-binding domain is found at 574–675 (DFAKVDLRIA…QGAQPGMRVK (102 aa)).

The protein belongs to the class-I aminoacyl-tRNA synthetase family. MetG type 1 subfamily. As to quaternary structure, homodimer. It depends on Zn(2+) as a cofactor.

It is found in the cytoplasm. The enzyme catalyses tRNA(Met) + L-methionine + ATP = L-methionyl-tRNA(Met) + AMP + diphosphate. Functionally, is required not only for elongation of protein synthesis but also for the initiation of all mRNA translation through initiator tRNA(fMet) aminoacylation. The sequence is that of Methionine--tRNA ligase from Alkalilimnicola ehrlichii (strain ATCC BAA-1101 / DSM 17681 / MLHE-1).